Reading from the N-terminus, the 252-residue chain is Type I iodothyronine deiodinase (252 aa).

Topologically, residues 1–17 are extracellular; it reads MESLLQTIKLMLRYIQK. Residues 18–38 form a helical; Signal-anchor for type III membrane protein membrane-spanning segment; the sequence is ALILFFLFLYVVVGKVLMFLF. Residues 39–252 lie on the Cytoplasmic side of the membrane; that stretch reads PQTMASVLKS…EVCSVLEKKK (214 aa). U130 is a catalytic residue. U130 is a non-standard amino acid (selenocysteine).

Belongs to the iodothyronine deiodinase family. In terms of assembly, predominantly monomer. Can form homodimers but homodimerization is not essential for enzyme activity.

It localises to the cell membrane. Its subcellular location is the endoplasmic reticulum membrane. The protein resides in the basolateral cell membrane. The enzyme catalyses 3,3',5-triiodo-L-thyronine + iodide + A + H(+) = L-thyroxine + AH2. It catalyses the reaction 3,3',5'-triiodo-L-thyronine + iodide + A + H(+) = L-thyroxine + AH2. The catalysed reaction is 3,3'-diiodo-L-thyronine + iodide + A + H(+) = 3,3',5'-triiodo-L-thyronine + AH2. It carries out the reaction 3,3'-diiodo-L-thyronine + iodide + A + H(+) = 3,3',5-triiodo-L-thyronine + AH2. The enzyme catalyses 3'-iodo-L-thyronine + iodide + A + H(+) = 3',5'-diiodo-L-thyronine + AH2. It catalyses the reaction 3-iodo-L-thyronine + iodide + A + H(+) = 3,5-diiodo-L-thyronine + AH2. The catalysed reaction is 3-iodo-L-thyronine + iodide + A + H(+) = 3,3'-diiodo-L-thyronine + AH2. It carries out the reaction 3,3'-diiodothyronamine + iodide + A + H(+) = 3,3',5'-triiodothyronamine + AH2. The enzyme catalyses 3'-iodothyronamine + iodide + A + H(+) = 3',5'-diiodothyronamine + AH2. It catalyses the reaction 3-iodothyronamine + iodide + A + H(+) = 3,3'-diiodothyronamine + AH2. The catalysed reaction is 3,3'-diiodothyronamine + iodide + A + H(+) = 3,3',5-triiodothyronamine + AH2. It carries out the reaction 3-iodothyronamine + iodide + A + H(+) = 3,5-diiodothyronamine + AH2. The enzyme catalyses 3,3'-diiodo-L-thyronine sulfate + iodide + A + H(+) = 3,3',5'-triiodo-L-thyronine sulfate + AH2. It catalyses the reaction 3,3',5'-triiodo-L-thyronine sulfate + iodide + A + H(+) = L-thyroxine sulfate + AH2. The catalysed reaction is 3,3'-diiodo-L-thyronine sulfate + iodide + A + H(+) = 3,3',5-triiodo-L-thyronine sulfate + AH2. Lacks sensitivity to 6-n-propylthiouracil. Plays a crucial role in the metabolism of thyroid hormones (TH) and has specific roles in TH activation and inactivation by deiodination. Catalyzes the deiodination of L-thyroxine (T4) to 3,5,3'-triiodothyronine (T3) and 3,3',5'-triiodothyronine (rT3) to 3,3'-diiodothyronine (3,3'-T2) via outer-ring deiodination (ORD). Catalyzes the deiodiantion of T4 to rT3 and T3 to 3,3'-T2 via inner-ring deiodination (IRD). Catalyzes the deiodination of 3',5'-diiodothyronine (3',5'-T2) to 3'-monoiodothyronine (3'-T1) via ORD. Catalyzes the deiodination of 3,5-diiodothyronine (3,5-T2) to 3-monoiodothyronine (3-T1) and 3,3'-T2 to 3-T1 via IRD. Catalyzes the phenolic ring deiodinations of 3,3',5'-triiodothyronamine, 3',5'-diiodothyronamine and 3,3'-diiodothyronamine as well as tyrosyl ring deiodinations of 3,5,3'-triiodothyronamine and 3,5-diiodothyronamine. Catalyzes the deiodination of L-thyroxine sulfate and 3,3',5-triiodo-L-thyronine sulfate via IRD and of 3,3',5'-triiodo-L-thyronine sulfate via ORD. This chain is Type I iodothyronine deiodinase (dio1), found in Xenopus laevis (African clawed frog).